The chain runs to 533 residues: DnaJ homolog subfamily C member 21 (533 aa).

The J domain occupies 3–70 (CHYEALGVRR…ERAWYDNHRE (68 aa)). 3 disordered regions span residues 278–311 (QFGD…AELY), 327–473 (KAMR…RVPA), and 503–533 (KATG…RKNR). A phosphoserine mark is found at Ser-283 and Ser-302. Basic and acidic residues predominate over residues 291-302 (QELRDGQDGKDS). Residues 315 to 339 (YCPACDKSFKTEKAMRNHEKSKKHR) form a C2H2-type 1 zinc finger. Polar residues predominate over residues 357–369 (SGPQTDENSLNAN). Ser-370 carries the phosphoserine modification. A compositionally biased stretch (basic residues) spans 381–392 (KLSRKQKKKKQK). A compositionally biased stretch (polar residues) spans 393-403 (PAQNYDDNFNE). Residues 455-464 (SKPKGKKAKD) are compositionally biased toward basic residues. The C2H2-type 2 zinc-finger motif lies at 484 to 508 (SCTTCHSEFPSRNKLFDHLKATGHA). Ser-512 is subject to Phosphoserine. Residues 512–523 (SSSTSLNSVTNS) are compositionally biased toward low complexity. Basic residues predominate over residues 524–533 (RNKKEKRKNR).

In terms of assembly, interacts with HSPA8, PA2G4 and ZNF622.

The protein localises to the cytoplasm. The protein resides in the nucleus. Its subcellular location is the nucleolus. Functionally, may act as a co-chaperone for HSP70. May play a role in ribosomal RNA (rRNA) biogenesis, possibly in the maturation of the 60S subunit. Binds the precursor 45S rRNA. This Bos taurus (Bovine) protein is DnaJ homolog subfamily C member 21 (DNAJC21).